A 1024-amino-acid polypeptide reads, in one-letter code: SWI/SNF-related matrix-associated actin-dependent regulator of chromatin subfamily A containing DEAD/H box 1 (1024 aa).

Met1 is subject to N-acetylmethionine. The interval 1-83 (MNLFNLDRFR…NESKASLSCF (83 aa)) is disordered. The segment covering 7–19 (DRFRFEKRSKIEE) has biased composition (basic and acidic residues). Phosphothreonine is present on Thr54. The residue at position 57 (Ser57) is a Phosphoserine. Residue Lys77 forms a Glycyl lysine isopeptide (Lys-Gly) (interchain with G-Cter in SUMO2) linkage. Phosphoserine is present on residues Ser79, Ser124, Ser127, Ser132, Ser145, and Ser151. Residues 156–198 (LKDAKLQTLKELFPQRSDSDLLKLIDSTSTMDGAIAAALLKFG) form the CUE 1 domain. The segment at 201-250 (GGGPRKRKLSSSSEAYEEDEANDDQSLKKPRGDRREESNESAEASSNWEK) is disordered. A phosphoserine mark is found at Ser210 and Ser213. Tyr216 is subject to Phosphotyrosine. Residues Ser238 and Ser241 each carry the phosphoserine modification. The region spanning 250 to 293 (KQESIVLKLQKEFPNFDKQELREVLKEHEWMYTEALESLKVFAE) is the CUE 2 domain. Residue Ser301 is modified to Phosphoserine. The disordered stretch occupies residues 331 to 369 (SMKPQNGFNKKRKKNVFNPKKAVEDSEYDSGSDAGSSLD). Residues Lys333 and Lys469 each participate in a glycyl lysine isopeptide (Lys-Gly) (interchain with G-Cter in SUMO2) cross-link. In terms of domain architecture, Helicase ATP-binding spans 507-675 (ALVHKHGLNG…MSLLNFVMPH (169 aa)). An ATP-binding site is contributed by 519–527 (ADEMGLGKT). Positions 626-629 (DEGH) match the DEGH box motif. Positions 719-736 (RRVKEEVLKLLPPKKDQI) match the Nuclear localization signal motif. A Glycyl lysine isopeptide (Lys-Gly) (interchain with G-Cter in SUMO2) cross-link involves residue Lys722. In terms of domain architecture, Helicase C-terminal spans 856–1008 (TLGCILSELK…MTTVDEADEG (153 aa)). ATP is bound at residue 895-902 (YLRLDGKT). Residue Lys994 forms a Glycyl lysine isopeptide (Lys-Gly) (interchain with G-Cter in SUMO2) linkage. Residues 1003 to 1006 (DEAD) carry the DEAD box motif.

It belongs to the SNF2/RAD54 helicase family. Binds to DNA preferentially in the vicinity of transcriptional start sites. Interacts with MSH2 and TRIM28. Part of a complex composed of TRIM28, HDAC1, HDAC2 and EHMT2. Interacts with PCNA.

It is found in the nucleus. Its subcellular location is the chromosome. The enzyme catalyses ATP + H2O = ADP + phosphate + H(+). Its function is as follows. DNA helicase that possesses intrinsic ATP-dependent nucleosome-remodeling activity and is both required for DNA repair and heterochromatin organization. Promotes DNA end resection of double-strand breaks (DSBs) following DNA damage: probably acts by weakening histone DNA interactions in nucleosomes flanking DSBs. Required for the restoration of heterochromatin organization after replication. Acts at replication sites to facilitate the maintenance of heterochromatin by directing H3 and H4 histones deacetylation, H3 'Lys-9' trimethylation (H3K9me3) and restoration of silencing. The protein is SWI/SNF-related matrix-associated actin-dependent regulator of chromatin subfamily A containing DEAD/H box 1 (Smarcad1) of Rattus norvegicus (Rat).